Consider the following 351-residue polypeptide: DNA nickase (351 aa).

Fe cation-binding residues include histidine 241, glutamate 245, and histidine 303.

Its function is as follows. Acts as a DNA nickase. The protein is DNA nickase of Nostoc sp. (strain PCC 7120 / SAG 25.82 / UTEX 2576).